The following is a 91-amino-acid chain: Small ribosomal subunit protein uS19 (91 aa).

The protein belongs to the universal ribosomal protein uS19 family.

Functionally, protein S19 forms a complex with S13 that binds strongly to the 16S ribosomal RNA. The chain is Small ribosomal subunit protein uS19 from Pseudomonas syringae pv. syringae (strain B728a).